Consider the following 245-residue polypeptide: Lactate utilization protein A (245 aa).

Belongs to the LutA/YkgE family.

Is involved in L-lactate degradation and allows cells to grow with lactate as the sole carbon source. This Macrococcus caseolyticus (strain JCSC5402) (Macrococcoides caseolyticum) protein is Lactate utilization protein A.